A 151-amino-acid chain; its full sequence is Small ribosomal subunit protein uS13 (151 aa).

It belongs to the universal ribosomal protein uS13 family. As to quaternary structure, part of the 30S ribosomal subunit. Forms a loose heterodimer with protein S19. Forms two bridges to the 50S subunit in the 70S ribosome.

Located at the top of the head of the 30S subunit, it contacts several helices of the 16S rRNA. In the 70S ribosome it contacts the 23S rRNA (bridge B1a) and protein L5 of the 50S subunit (bridge B1b), connecting the 2 subunits; these bridges are implicated in subunit movement. In Methanospirillum hungatei JF-1 (strain ATCC 27890 / DSM 864 / NBRC 100397 / JF-1), this protein is Small ribosomal subunit protein uS13.